Reading from the N-terminus, the 89-residue chain is Small ribosomal subunit protein uS15 (89 aa).

It belongs to the universal ribosomal protein uS15 family. Part of the 30S ribosomal subunit. Forms a bridge to the 50S subunit in the 70S ribosome, contacting the 23S rRNA.

Functionally, one of the primary rRNA binding proteins, it binds directly to 16S rRNA where it helps nucleate assembly of the platform of the 30S subunit by binding and bridging several RNA helices of the 16S rRNA. In terms of biological role, forms an intersubunit bridge (bridge B4) with the 23S rRNA of the 50S subunit in the ribosome. This chain is Small ribosomal subunit protein uS15, found in Shewanella denitrificans (strain OS217 / ATCC BAA-1090 / DSM 15013).